The sequence spans 264 residues: Thiazole synthase (264 aa).

Lys-101 functions as the Schiff-base intermediate with DXP in the catalytic mechanism. Residues Gly-162, 189–190 (AG), and 211–212 (NT) each bind 1-deoxy-D-xylulose 5-phosphate. Residues 245–264 (KRQTASPSTPTLGQPFWHNQ) are disordered.

This sequence belongs to the ThiG family. In terms of assembly, homotetramer. Forms heterodimers with either ThiH or ThiS.

Its subcellular location is the cytoplasm. It catalyses the reaction [ThiS sulfur-carrier protein]-C-terminal-Gly-aminoethanethioate + 2-iminoacetate + 1-deoxy-D-xylulose 5-phosphate = [ThiS sulfur-carrier protein]-C-terminal Gly-Gly + 2-[(2R,5Z)-2-carboxy-4-methylthiazol-5(2H)-ylidene]ethyl phosphate + 2 H2O + H(+). It functions in the pathway cofactor biosynthesis; thiamine diphosphate biosynthesis. Functionally, catalyzes the rearrangement of 1-deoxy-D-xylulose 5-phosphate (DXP) to produce the thiazole phosphate moiety of thiamine. Sulfur is provided by the thiocarboxylate moiety of the carrier protein ThiS. In vitro, sulfur can be provided by H(2)S. In Cellvibrio japonicus (strain Ueda107) (Pseudomonas fluorescens subsp. cellulosa), this protein is Thiazole synthase.